Here is a 105-residue protein sequence, read N- to C-terminus: WRMIWEKRVEAIVMLTNVDENGRRKCEKYWPGDTERGSHGEFEVSCIDNTTLGQIIRRKFKISHQSYPNRTQVVVQYHYTAWPDHGVPQTTSELFNLRRIVRTEF.

The Tyrosine-protein phosphatase domain occupies 1 to 105 (WRMIWEKRVE…NLRRIVRTEF (105 aa)). A substrate-binding site is contributed by Asp84.

Belongs to the protein-tyrosine phosphatase family.

The enzyme catalyses O-phospho-L-tyrosyl-[protein] + H2O = L-tyrosyl-[protein] + phosphate. This chain is Tyrosine-protein phosphatase 12 (STY-12), found in Styela plicata (Wrinkled sea squirt).